A 606-amino-acid polypeptide reads, in one-letter code: Double-stranded RNA-binding protein Staufen homolog 2 (606 aa).

2 DRBM domains span residues 8-75 and 95-181; these read TPMC…ESSL and TPTV…ALKN. Disordered regions lie at residues 57–97 and 177–205; these read SIKK…ITPT and QALK…SDAS. Residues 85 to 97 show a composition bias toward polar residues; it reads ADSNSNPGSITPT. Over residues 192 to 205 the composition is skewed to basic and acidic residues; the sequence is SEEKKETEENSDAS. 3 consecutive DRBM domains span residues 207 to 274, 307 to 375, and 493 to 557; these read SEIS…ELKK, NPIS…QLGY, and QPSQ…QLSE. Residues 580–606 form a disordered region; the sequence is RLAERTESKPTNSGTTAQDCKDSKAVV. A compositionally biased stretch (polar residues) spans 588 to 597; sequence KPTNSGTTAQ.

In terms of biological role, RNA-binding protein required for the microtubule-dependent transport of RNAs within polarized cell types. The chain is Double-stranded RNA-binding protein Staufen homolog 2 (stau2) from Danio rerio (Zebrafish).